Reading from the N-terminus, the 88-residue chain is Cell division topological specificity factor (88 aa).

It belongs to the MinE family.

Prevents the cell division inhibition by proteins MinC and MinD at internal division sites while permitting inhibition at polar sites. This ensures cell division at the proper site by restricting the formation of a division septum at the midpoint of the long axis of the cell. This chain is Cell division topological specificity factor, found in Herminiimonas arsenicoxydans.